Consider the following 200-residue polypeptide: Large ribosomal subunit protein uL4 (200 aa).

A disordered region spans residues 42-69 (SKAQKNRSDVSGGGRKPWRQKGTGRARA).

This sequence belongs to the universal ribosomal protein uL4 family. Part of the 50S ribosomal subunit.

Functionally, one of the primary rRNA binding proteins, this protein initially binds near the 5'-end of the 23S rRNA. It is important during the early stages of 50S assembly. It makes multiple contacts with different domains of the 23S rRNA in the assembled 50S subunit and ribosome. Its function is as follows. Forms part of the polypeptide exit tunnel. The chain is Large ribosomal subunit protein uL4 from Alcanivorax borkumensis (strain ATCC 700651 / DSM 11573 / NCIMB 13689 / SK2).